The primary structure comprises 842 residues: Protein translocase subunit SecA (842 aa).

ATP-binding positions include Gln-85, 103-107 (GEGKT), and Asp-493. Zn(2+)-binding residues include Cys-825, Cys-827, Cys-836, and His-837.

It belongs to the SecA family. Monomer and homodimer. Part of the essential Sec protein translocation apparatus which comprises SecA, SecYEG and auxiliary proteins SecDF. Other proteins may also be involved. It depends on Zn(2+) as a cofactor.

The protein localises to the cell membrane. The protein resides in the cytoplasm. The enzyme catalyses ATP + H2O + cellular proteinSide 1 = ADP + phosphate + cellular proteinSide 2.. In terms of biological role, part of the Sec protein translocase complex. Interacts with the SecYEG preprotein conducting channel. Has a central role in coupling the hydrolysis of ATP to the transfer of proteins into and across the cell membrane, serving as an ATP-driven molecular motor driving the stepwise translocation of polypeptide chains across the membrane. The sequence is that of Protein translocase subunit SecA from Streptococcus equi subsp. equi (strain 4047).